The sequence spans 200 residues: Small ribosomal subunit protein uS4 (200 aa).

The interval 22–42 (TGKELQKRPYPPGQHGPGQRR) is disordered. The S4 RNA-binding domain occupies 92–152 (SRLDNLVYRL…EKSRNLQVIK (61 aa)).

This sequence belongs to the universal ribosomal protein uS4 family. As to quaternary structure, part of the 30S ribosomal subunit. Contacts protein S5. The interaction surface between S4 and S5 is involved in control of translational fidelity.

One of the primary rRNA binding proteins, it binds directly to 16S rRNA where it nucleates assembly of the body of the 30S subunit. Functionally, with S5 and S12 plays an important role in translational accuracy. This Geobacillus kaustophilus (strain HTA426) protein is Small ribosomal subunit protein uS4.